We begin with the raw amino-acid sequence, 239 residues long: MEGTVESQTPDLRDVEGKVGRKTPEGLLRGLRGECELGTSGALLLPGASSTGHDLGDKIMALKMELAYLRAIDVKILQQLVTLNEGIEAVRWLLEERGTLTSHCSSLTSSQYSLTGGSPGRSRRGSWDSLPDTSTTDRLDSVSIGSFLDTVAPSELDEQGPPGAPRSEMDWAKVIAGGERARTEVDVAATRLGSLRAVWKPPGERLQGGPPESPEDESAKLGFEAHWFWEQCQDDVTFL.

LRR repeat units lie at residues 55-83 (LGDK…LVTL) and 93-114 (LLEE…QYSL). Residues 107-116 (LTSSQYSLTG) show a composition bias toward low complexity. Disordered stretches follow at residues 107–139 (LTSS…TDRL) and 200–219 (KPPG…DESA). Residues serine 118, serine 126, serine 129, and serine 213 each carry the phosphoserine modification.

In terms of assembly, forms a tripartite complex with CDC42BPA/CDC42BPB and MYO18A acting as an adapter connecting both. Its binding to CDC42BPA/CDC42BPB results in their activation by abolition of their negative autoregulation. Interacts with CDC42BPA and CDC42BPB.

Its subcellular location is the cytoplasm. In terms of biological role, acts as an activator of the canonical NF-kappa-B pathway and drive the production of pro-inflammatory cytokines. Promotes the antigen (Ag)-presenting and priming function of dendritic cells via the canonical NF-kappa-B pathway. In concert with MYO18A and CDC42BPA/CDC42BPB, is involved in modulating lamellar actomyosin retrograde flow that is crucial to cell protrusion and migration. Activates CDC42BPA/CDC42BPB and targets it to actomyosin through its interaction with MYO18A, leading to MYL9/MLC2 phosphorylation and MYH9/MYH10-dependent actomyosin assembly in the lamella. The sequence is that of Leucine rich adaptor protein 1 (LURAP1) from Homo sapiens (Human).